The chain runs to 251 residues: Hydroxyacylglutathione hydrolase (251 aa).

Zn(2+)-binding residues include H53, H55, D57, H58, H110, D127, and H165.

This sequence belongs to the metallo-beta-lactamase superfamily. Glyoxalase II family. In terms of assembly, monomer. Zn(2+) is required as a cofactor.

It catalyses the reaction an S-(2-hydroxyacyl)glutathione + H2O = a 2-hydroxy carboxylate + glutathione + H(+). The protein operates within secondary metabolite metabolism; methylglyoxal degradation; (R)-lactate from methylglyoxal: step 2/2. Its function is as follows. Thiolesterase that catalyzes the hydrolysis of S-D-lactoyl-glutathione to form glutathione and D-lactic acid. This is Hydroxyacylglutathione hydrolase from Citrobacter koseri (strain ATCC BAA-895 / CDC 4225-83 / SGSC4696).